The primary structure comprises 394 residues: Nuclear hormone receptor family member nhr-103 (394 aa).

Residues 8 to 83 (SGPCEICGQK…VGMDSKKFQT (76 aa)) constitute a DNA-binding region (nuclear receptor). Residues 11-31 (CEICGQKTSGRHFGVLSCRSC) form an NR C4-type zinc finger. The NR C4-type; degenerate zinc finger occupies 47–66 (QCVKGTCKIFEDGKFNCKQC). The NR LBD domain maps to 126–394 (YLVDMAKNLL…FSHPEMFETT (269 aa)).

The protein belongs to the nuclear hormone receptor family.

It localises to the nucleus. In terms of biological role, orphan nuclear receptor. This chain is Nuclear hormone receptor family member nhr-103 (nhr-103), found in Caenorhabditis elegans.